Consider the following 195-residue polypeptide: MDRVLSRADKERLLELLKLPRQLWGDFGRMQQAYKQQSLLLHPDKGGSHALMQELNSLWGTFKTEVYNLRMNLGGTGFQVRRLHADGWNLSTKDTFGDRYYQRFCRMPLTCLVNVKYSSCSCILCLLRKQHRELKDKCDARCLVLGECFCLECYMQWFGTPTRDVLNLYADFIASMPIDWLDLDVHSVYNPRLSP.

M1 is modified (N-acetylmethionine; by host). In terms of domain architecture, J spans 12-75 (RLLELLKLPR…VYNLRMNLGG (64 aa)).

Interacts with host PPP2R1A; the interaction inhibits PP2A activity.

It localises to the host cytoplasm. It is found in the host nucleus. In terms of biological role, promotes efficient viral genome replication by accelerating both G1 and S phase progression of the cell cycle. Inhibits host PP2A by binding to the A subunit, thereby displacing lower affinity regulatory B subunit. Inactivation of PP2A in turn results in the transactivation of cyclin A and cyclin D1 promoters. Late during the infection cycle, ST may induce dephosphorylation of host MTOR, leading to the inhibition of cap-dependent translation. May establish and maintain high levels of viral genomes during persistent infection in cell culture. The protein is Small t antigen of Mus musculus (Mouse).